The primary structure comprises 181 residues: Oligoribonuclease (181 aa).

Residues 8 to 171 (LIWIDLEMTG…DDIRESVAEL (164 aa)) form the Exonuclease domain. Residue Y129 is part of the active site.

This sequence belongs to the oligoribonuclease family.

It localises to the cytoplasm. Functionally, 3'-to-5' exoribonuclease specific for small oligoribonucleotides. The polypeptide is Oligoribonuclease (Sodalis glossinidius (strain morsitans)).